The primary structure comprises 279 residues: Bis(5'-nucleosyl)-tetraphosphatase, symmetrical (279 aa).

Belongs to the Ap4A hydrolase family.

It carries out the reaction P(1),P(4)-bis(5'-adenosyl) tetraphosphate + H2O = 2 ADP + 2 H(+). In terms of biological role, hydrolyzes diadenosine 5',5'''-P1,P4-tetraphosphate to yield ADP. In Edwardsiella ictaluri (strain 93-146), this protein is Bis(5'-nucleosyl)-tetraphosphatase, symmetrical.